Consider the following 769-residue polypeptide: Endothelin-converting enzyme 1 (769 aa).

Topologically, residues 1 to 67 are cytoplasmic; that stretch reads MRTVWSPLAA…WAARTSVEKR (67 aa). Phosphothreonine is present on threonine 24. Residues 68–88 traverse the membrane as a helical; Signal-anchor for type II membrane protein segment; it reads LVVLVTLLAAGLVACLAALGI. The Extracellular portion of the chain corresponds to 89-769; the sequence is QYQTRTPPVC…MNPHHKCEVW (681 aa). The 673-residue stretch at 97–769 folds into the Peptidase M13 domain; it reads VCLTEACVSV…MNPHHKCEVW (673 aa). Disulfide bonds link cysteine 98-cysteine 103, cysteine 121-cysteine 754, cysteine 129-cysteine 714, cysteine 184-cysteine 434, and cysteine 643-cysteine 766. N-linked (GlcNAc...) asparagine glycosylation is found at asparagine 165, asparagine 186, asparagine 209, asparagine 269, asparagine 315, asparagine 361, asparagine 382, and asparagine 538. Histidine 606 serves as a coordination point for Zn(2+). The active site involves glutamate 607. Position 610 (histidine 610) interacts with Zn(2+). N-linked (GlcNAc...) asparagine glycosylation is found at asparagine 631 and asparagine 650. Residue glutamate 666 coordinates Zn(2+). The Proton donor role is filled by aspartate 670.

Belongs to the peptidase M13 family. As to quaternary structure, homodimer; disulfide-linked. Interacts with PPP1R16B. Interacts with TSPAN8; this interaction recruits the endothelin converting enzyme ECE1 to tetraspanin-enriched microdomains and positively modulates its enzymatic activity. Requires Zn(2+) as cofactor.

Its subcellular location is the cell membrane. It catalyses the reaction Hydrolysis of the 21-Trp-|-Val-22 bond in big endothelin to form endothelin 1.. Its activity is regulated as follows. Inhibited by phosphoramidon. Converts big endothelin-1 to endothelin-1. This chain is Endothelin-converting enzyme 1 (Ece1), found in Mus musculus (Mouse).